The primary structure comprises 172 residues: 3-hydroxydecanoyl-[acyl-carrier-protein] dehydratase (172 aa).

Histidine 71 is a catalytic residue.

This sequence belongs to the thioester dehydratase family. FabA subfamily. As to quaternary structure, homodimer.

Its subcellular location is the cytoplasm. It carries out the reaction a (3R)-hydroxyacyl-[ACP] = a (2E)-enoyl-[ACP] + H2O. The enzyme catalyses (3R)-hydroxydecanoyl-[ACP] = (2E)-decenoyl-[ACP] + H2O. It catalyses the reaction (2E)-decenoyl-[ACP] = (3Z)-decenoyl-[ACP]. Its pathway is lipid metabolism; fatty acid biosynthesis. Functionally, necessary for the introduction of cis unsaturation into fatty acids. Catalyzes the dehydration of (3R)-3-hydroxydecanoyl-ACP to E-(2)-decenoyl-ACP and then its isomerization to Z-(3)-decenoyl-ACP. Can catalyze the dehydratase reaction for beta-hydroxyacyl-ACPs with saturated chain lengths up to 16:0, being most active on intermediate chain length. This chain is 3-hydroxydecanoyl-[acyl-carrier-protein] dehydratase, found in Yersinia pseudotuberculosis serotype O:1b (strain IP 31758).